The chain runs to 598 residues: Proline--tRNA ligase (598 aa).

This sequence belongs to the class-II aminoacyl-tRNA synthetase family. ProS type 1 subfamily. In terms of assembly, homodimer.

It localises to the cytoplasm. It catalyses the reaction tRNA(Pro) + L-proline + ATP = L-prolyl-tRNA(Pro) + AMP + diphosphate. In terms of biological role, catalyzes the attachment of proline to tRNA(Pro) in a two-step reaction: proline is first activated by ATP to form Pro-AMP and then transferred to the acceptor end of tRNA(Pro). As ProRS can inadvertently accommodate and process non-cognate amino acids such as alanine and cysteine, to avoid such errors it has two additional distinct editing activities against alanine. One activity is designated as 'pretransfer' editing and involves the tRNA(Pro)-independent hydrolysis of activated Ala-AMP. The other activity is designated 'posttransfer' editing and involves deacylation of mischarged Ala-tRNA(Pro). The misacylated Cys-tRNA(Pro) is not edited by ProRS. In Rippkaea orientalis (strain PCC 8801 / RF-1) (Cyanothece sp. (strain PCC 8801)), this protein is Proline--tRNA ligase.